The sequence spans 348 residues: Major outer membrane protein P.IB (348 aa).

An N-terminal signal peptide occupies residues 1-19 (MKKSLIALTLAALPVAAMA).

The protein belongs to the Gram-negative porin family. In terms of assembly, homotrimer.

Its subcellular location is the cell outer membrane. Serves as a slightly cation selective porin. Major antigen on the gonococcal cell surface and it may have pathogenic properties in addition to its porin activity. The chain is Major outer membrane protein P.IB (porB) from Neisseria gonorrhoeae.